A 628-amino-acid polypeptide reads, in one-letter code: Choline transporter-like protein 2 (628 aa).

Over Met-1–Cys-31 the chain is Cytoplasmic. Residues Phe-32–Val-52 traverse the membrane as a helical segment. The Extracellular segment spans residues Lys-53–Trp-204. 4 N-linked (GlcNAc...) asparagine glycosylation sites follow: Asn-82, Asn-118, Asn-146, and Asn-168. Residues Arg-205 to Leu-225 form a helical membrane-spanning segment. Arg-226 is a topological domain (cytoplasmic). Residues Phe-227–Leu-247 traverse the membrane as a helical segment. Topologically, residues Thr-248 to Lys-282 are extracellular. The chain crosses the membrane as a helical span at residues Val-283–Phe-303. Over Ser-304 to Ala-319 the chain is Cytoplasmic. Residues Ile-320–Phe-340 form a helical membrane-spanning segment. Topologically, residues Thr-341–His-381 are extracellular. A helical transmembrane segment spans residues Phe-382 to Gly-402. At Ala-403–His-432 the chain is on the cytoplasmic side. A helical membrane pass occupies residues Leu-433–Leu-453. At Arg-454–Ser-530 the chain is on the extracellular side. A helical membrane pass occupies residues Phe-531–Leu-551. Topologically, residues Leu-552–Ser-559 are cytoplasmic. A helical membrane pass occupies residues Phe-560 to Met-580. The Extracellular segment spans residues Ser-581–Cys-628.

The protein belongs to the CTL (choline transporter-like) family.

The protein resides in the cell membrane. It is found in the mitochondrion outer membrane. The catalysed reaction is choline(out) + n H(+)(in) = choline(in) + n H(+)(out). It carries out the reaction ethanolamine(out) + n H(+)(in) = ethanolamine(in) + n H(+)(out). Its function is as follows. Choline/H+ antiporter, mainly in mitochodria. Also acts as a low-affinity ethanolamine/H+ antiporter, regulating the supply of extracellular ethanolamine (Etn) for the CDP-Etn pathway, redistribute intracellular Etn and balance the CDP-Cho and CDP-Etn arms of the Kennedy pathway. This is Choline transporter-like protein 2 (slc44a2) from Dictyostelium discoideum (Social amoeba).